A 440-amino-acid polypeptide reads, in one-letter code: 3-phosphoshikimate 1-carboxyvinyltransferase (440 aa).

The 3-phosphoshikimate site is built by K29 and R34. K29 contributes to the phosphoenolpyruvate binding site. G99 and R128 together coordinate phosphoenolpyruvate. The 3-phosphoshikimate site is built by S171, S172, Q173, S199, D316, and K343. Q173 contributes to the phosphoenolpyruvate binding site. Catalysis depends on D316, which acts as the Proton acceptor. Phosphoenolpyruvate-binding residues include R347, R390, and K416.

It belongs to the EPSP synthase family. As to quaternary structure, monomer.

The protein resides in the cytoplasm. It catalyses the reaction 3-phosphoshikimate + phosphoenolpyruvate = 5-O-(1-carboxyvinyl)-3-phosphoshikimate + phosphate. Its pathway is metabolic intermediate biosynthesis; chorismate biosynthesis; chorismate from D-erythrose 4-phosphate and phosphoenolpyruvate: step 6/7. Its function is as follows. Catalyzes the transfer of the enolpyruvyl moiety of phosphoenolpyruvate (PEP) to the 5-hydroxyl of shikimate-3-phosphate (S3P) to produce enolpyruvyl shikimate-3-phosphate and inorganic phosphate. The sequence is that of 3-phosphoshikimate 1-carboxyvinyltransferase from Deinococcus geothermalis (strain DSM 11300 / CIP 105573 / AG-3a).